Here is a 1134-residue protein sequence, read N- to C-terminus: Tyrosine-protein kinase receptor Tie-1 (1134 aa).

Residues 1 to 22 form the signal peptide; that stretch reads MVWWGSSLLLPTLFLASHVGAS. Residues 23–755 are Extracellular-facing; that stretch reads VDLTLLANLR…SRAAEEGLDQ (733 aa). Residues 43–123 form the Ig-like C2-type 1 domain; the sequence is CVSGEAGAGR…VLYVHNSPGA (81 aa). N-linked (GlcNAc...) asparagine glycosylation is found at N81 and N159. EGF-like domains lie at 212 to 254, 256 to 301, and 303 to 343; these read GCGA…TRCE, ACRE…SQCQ, and ACAP…VHCE. Disulfide bonds link C226–C235, C229–C242, C244–C253, C266–C276, C270–C289, C291–C300, C313–C325, C319–C331, and C333–C342. The region spanning 349–440 is the Ig-like C2-type 2 domain; the sequence is PQILSMATEV…GQDSRRFKVN (92 aa). 3 consecutive Fibronectin type-III domains span residues 444-543, 546-638, and 642-736; these read PPVP…CPEP, QPWL…LPPS, and APRH…LGNG. Residues N501, N592, and N705 are each glycosylated (N-linked (GlcNAc...) asparagine). Residues 756–780 form a helical membrane-spanning segment; sequence QLVLAVVGSVSATCLTILAALLALV. At 781-1134 the chain is on the cytoplasmic side; the sequence is CIRRSCLHRR…AGIDATAEEA (354 aa). The 280-residue stretch at 835–1114 folds into the Protein kinase domain; that stretch reads ITFEDLIGEG…RMLEARKAYV (280 aa). ATP contacts are provided by residues 841-849 and K866; that span reads IGEGNFGQV. D975 serves as the catalytic Proton acceptor. Position 1003 is a phosphotyrosine; by autocatalysis (Y1003).

Belongs to the protein kinase superfamily. Tyr protein kinase family. Tie subfamily. In terms of assembly, heterodimer with TEK/TIE2. Interacts with SVEP1 (via C-terminus). Post-translationally, phosphorylated on tyrosine residues in response to ANGPT1, most likely by TEK/TIE2. In terms of tissue distribution, specifically expressed in developing vascular endothelial cells. Abundantly expressed in lung and heart, moderately in brain, liver and kidney, and weakly in thymus, spleen and testis.

It is found in the cell membrane. It catalyses the reaction L-tyrosyl-[protein] + ATP = O-phospho-L-tyrosyl-[protein] + ADP + H(+). Transmembrane tyrosine-protein kinase that may modulate TEK/TIE2 activity and contribute to the regulation of angiogenesis. This is Tyrosine-protein kinase receptor Tie-1 (Tie1) from Mus musculus (Mouse).